The sequence spans 516 residues: Maturase K (516 aa).

Belongs to the intron maturase 2 family. MatK subfamily.

It is found in the plastid. It localises to the chloroplast. Its function is as follows. Usually encoded in the trnK tRNA gene intron. Probably assists in splicing its own and other chloroplast group II introns. This chain is Maturase K, found in Disporum sessile (Japanese fairy bells).